A 738-amino-acid polypeptide reads, in one-letter code: Coiled-coil domain-containing protein 142 (738 aa).

The interval 1–34 (MARASSSSGPLPPLANVPSSWAQPVGAGEERDEG) is disordered. Residues 69-92 (ALQRLRATLLRLHREREQLLRARD) are a coiled coil. Residues 682–704 (LSTLGGGGRGGGGGGGPGPSPEA) are disordered. Positions 685–698 (LGGGGRGGGGGGGP) are enriched in gly residues.

The polypeptide is Coiled-coil domain-containing protein 142 (Ccdc142) (Mus musculus (Mouse)).